A 403-amino-acid polypeptide reads, in one-letter code: Ubiquitin-like modifier-activating enzyme 5 (403 aa).

5 residues coordinate ATP: Gly81, Asp102, Lys125, Asn148, and Asn182. 2 residues coordinate Zn(2+): Cys224 and Cys227. Cys248 acts as the Glycyl thioester intermediate in catalysis. 2 residues coordinate Zn(2+): Cys301 and Cys306. A UFM1-interacting sequence (UIS) motif is present at residues 333–345; that stretch reads VVHEDNEWGIELV. Residues 346–376 are linker; sequence SEVSEEELKNSSGPVPTLPEGITVAYTVPKK. A phosphoserine mark is found at Ser357 and Ser392. Positions 388–403 match the UFC1-binding sequence (UFC) motif; it reads DSGESLEDLMARMKNM.

The protein belongs to the ubiquitin-activating E1 family. UBA5 subfamily. In terms of assembly, homodimer; homodimerization is required for UFM1 activation. Interacts (via UIS motif) with UFM1; binds UFM1 via a trans-binding mechanism in which UFM1 interacts with distinct sites in both subunits of the UBA5 homodimer. Interacts (via C-terminus) with UFC1. Interacts (via UIS motif) with GABARAPL2 and, with lower affinity, with GABARAP and GABARAPL1.

The protein localises to the cytoplasm. Its subcellular location is the nucleus. It localises to the endoplasmic reticulum membrane. The protein resides in the golgi apparatus. E1-like enzyme which specifically catalyzes the first step in ufmylation. Activates UFM1 by first adenylating its C-terminal glycine residue with ATP, and thereafter linking this residue to the side chain of a cysteine residue in E1, yielding a UFM1-E1 thioester and free AMP. Activates UFM1 via a trans-binding mechanism, in which UFM1 interacts with distinct sites in both subunits of the UBA5 homodimer. Trans-binding also promotes stabilization of the UBA5 homodimer, and enhances ATP-binding. Transfer of UFM1 from UBA5 to the E2-like enzyme UFC1 also takes place using a trans mechanism. Ufmylation plays a key role in various processes, such as ribosome recycling, response to DNA damage, interferon response or reticulophagy (also called ER-phagy). Ufmylation is essential for erythroid differentiation of both megakaryocytes and erythrocytes. This is Ubiquitin-like modifier-activating enzyme 5 from Mus musculus (Mouse).